Consider the following 227-residue polypeptide: Endonuclease V (227 aa).

Mg(2+) contacts are provided by Asp46 and Asp114.

This sequence belongs to the endonuclease V family. Mg(2+) serves as cofactor.

Its subcellular location is the cytoplasm. The catalysed reaction is Endonucleolytic cleavage at apurinic or apyrimidinic sites to products with a 5'-phosphate.. In terms of biological role, DNA repair enzyme involved in the repair of deaminated bases. Selectively cleaves double-stranded DNA at the second phosphodiester bond 3' to a deoxyinosine leaving behind the intact lesion on the nicked DNA. This chain is Endonuclease V, found in Alkalilimnicola ehrlichii (strain ATCC BAA-1101 / DSM 17681 / MLHE-1).